The following is a 487-amino-acid chain: GTPase Der (487 aa).

EngA-type G domains lie at 3 to 167 (FTLA…EGFA) and 203 to 378 (LQIA…DIWN). GTP contacts are provided by residues 9 to 16 (GRPNVGKS), 56 to 60 (DTAGL), 119 to 122 (NKAE), 209 to 216 (GRPNAGKS), 256 to 260 (DTAGM), and 321 to 324 (NKWD). In terms of domain architecture, KH-like spans 379-463 (RRITTARLNT…PIRLTMRGQG (85 aa)). The tract at residues 451–487 (PGTPIRLTMRGQGDKNPFKERKFRTPSRLRKHLGKKD) is disordered. Basic residues predominate over residues 471 to 487 (RKFRTPSRLRKHLGKKD).

Belongs to the TRAFAC class TrmE-Era-EngA-EngB-Septin-like GTPase superfamily. EngA (Der) GTPase family. As to quaternary structure, associates with the 50S ribosomal subunit.

Its function is as follows. GTPase that plays an essential role in the late steps of ribosome biogenesis. The sequence is that of GTPase Der from Cereibacter sphaeroides (strain ATCC 17029 / ATH 2.4.9) (Rhodobacter sphaeroides).